The following is a 72-amino-acid chain: Large ribosomal subunit protein bL32 (72 aa).

The protein belongs to the bacterial ribosomal protein bL32 family.

The chain is Large ribosomal subunit protein bL32 from Dehalococcoides mccartyi (strain ATCC BAA-2266 / KCTC 15142 / 195) (Dehalococcoides ethenogenes (strain 195)).